The chain runs to 464 residues: GDNF family receptor alpha-2 (464 aa).

Positions Met1–Ala21 are cleaved as a signal peptide. Disulfide bonds link Cys40-Cys93, Cys95-Cys105, Cys161-Cys222, Cys168-Cys174, Cys185-Cys200, Cys195-Cys241, Cys224-Cys229, Cys251-Cys323, Cys258-Cys264, Cys275-Cys293, and Cys285-Cys347. Asn52 is a glycosylation site (N-linked (GlcNAc...) asparagine). Residue Asn357 is glycosylated (N-linked (GlcNAc...) asparagine). A disordered region spans residues Val363–Thr392. A compositionally biased stretch (low complexity) spans Thr381–Thr392. Asn413 carries an N-linked (GlcNAc...) asparagine glycan. Ser444 carries the GPI-anchor amidated serine lipid modification. Positions Arg445–Leu464 are cleaved as a propeptide — removed in mature form.

The protein belongs to the GDNFR family. Interacts with NRTN ligand and RET: forms a 2:2:2 ternary complex composed of NRTN ligand, GFRA2 and RET receptor. Also forms a 4:4:4 tetrameric complex composed of 4 copies of NRTN ligand, GFRA2 and RET receptor, which prevents endocytosis of RET. Interacts with SORL1. Found in both brain and placenta.

It is found in the cell membrane. In terms of biological role, receptor for neurturin (NRTN), a growth factor that supports the survival of sympathetic neurons. NRTN-binding leads to autophosphorylation and activation of the RET receptor. Also able to mediate GDNF signaling through the RET tyrosine kinase receptor. Functionally, participates in NRTN-induced 'Ser-727' phosphorylation of STAT3. This Homo sapiens (Human) protein is GDNF family receptor alpha-2 (GFRA2).